A 161-amino-acid chain; its full sequence is Regulator of ribonuclease activity A (161 aa).

This sequence belongs to the RraA family. As to quaternary structure, homotrimer. Binds to both RNA-binding sites in the C-terminal region of Rne and to RhlB.

The protein resides in the cytoplasm. Functionally, globally modulates RNA abundance by binding to RNase E (Rne) and regulating its endonucleolytic activity. Can modulate Rne action in a substrate-dependent manner by altering the composition of the degradosome. Modulates RNA-binding and helicase activities of the degradosome. This chain is Regulator of ribonuclease activity A, found in Pectobacterium atrosepticum (strain SCRI 1043 / ATCC BAA-672) (Erwinia carotovora subsp. atroseptica).